The sequence spans 282 residues: Ribosomal RNA small subunit methyltransferase A (282 aa).

The S-adenosyl-L-methionine site is built by His-11, Leu-13, Gly-44, Glu-65, Asp-90, and Asn-106.

This sequence belongs to the class I-like SAM-binding methyltransferase superfamily. rRNA adenine N(6)-methyltransferase family. RsmA subfamily.

It localises to the cytoplasm. It carries out the reaction adenosine(1518)/adenosine(1519) in 16S rRNA + 4 S-adenosyl-L-methionine = N(6)-dimethyladenosine(1518)/N(6)-dimethyladenosine(1519) in 16S rRNA + 4 S-adenosyl-L-homocysteine + 4 H(+). Its function is as follows. Specifically dimethylates two adjacent adenosines (A1518 and A1519) in the loop of a conserved hairpin near the 3'-end of 16S rRNA in the 30S particle. May play a critical role in biogenesis of 30S subunits. This is Ribosomal RNA small subunit methyltransferase A from Synechococcus sp. (strain JA-2-3B'a(2-13)) (Cyanobacteria bacterium Yellowstone B-Prime).